The chain runs to 438 residues: Chromosomal replication initiator protein DnaA (438 aa).

The segment at 1-71 (MTELDSLWEA…VEIVYQRTGQ (71 aa)) is domain I, interacts with DnaA modulators. A domain II region spans residues 71 to 101 (QEIRPDYVLATDPTPLAQTPPRPQSTFKEET). A disordered region spans residues 81-100 (TDPTPLAQTPPRPQSTFKEE). Positions 102-318 (PLNPEYTFQT…GALMRIRVFS (217 aa)) are domain III, AAA+ region. Positions 146, 148, 149, and 150 each coordinate ATP. The segment at 319–438 (ELHQQPITLK…LVKLKNDLQA (120 aa)) is domain IV, binds dsDNA.

The protein belongs to the DnaA family. As to quaternary structure, oligomerizes as a right-handed, spiral filament on DNA at oriC.

The protein localises to the cytoplasm. Functionally, plays an essential role in the initiation and regulation of chromosomal replication. ATP-DnaA binds to the origin of replication (oriC) to initiate formation of the DNA replication initiation complex once per cell cycle. Binds the DnaA box (a 9 base pair repeat at the origin) and separates the double-stranded (ds)DNA. Forms a right-handed helical filament on oriC DNA; dsDNA binds to the exterior of the filament while single-stranded (ss)DNA is stabiized in the filament's interior. The ATP-DnaA-oriC complex binds and stabilizes one strand of the AT-rich DNA unwinding element (DUE), permitting loading of DNA polymerase. After initiation quickly degrades to an ADP-DnaA complex that is not apt for DNA replication. Binds acidic phospholipids. In Limosilactobacillus fermentum (strain NBRC 3956 / LMG 18251) (Lactobacillus fermentum), this protein is Chromosomal replication initiator protein DnaA.